Consider the following 478-residue polypeptide: JmjC domain-containing histone demethylation protein 1 (478 aa).

Residues 6–70 (VKCHFCKKDD…HVESFKCTLH (65 aa)) form a PHD-type zinc finger. The 160-residue stretch at 242–401 (SHVESFKDGI…TQLNVVEIEH (160 aa)) folds into the JmjC domain. T294 is a substrate binding site. Fe cation contacts are provided by H297 and D299. K314 contributes to the substrate binding site. A Fe cation-binding site is contributed by H369.

This sequence belongs to the JHDM1 histone demethylase family. Fe(2+) serves as cofactor.

It localises to the nucleus. It catalyses the reaction N(6),N(6)-dimethyl-L-lysyl(36)-[histone H3] + 2 2-oxoglutarate + 2 O2 = L-lysyl(36)-[histone H3] + 2 formaldehyde + 2 succinate + 2 CO2. Functionally, histone demethylase that specifically demethylates 'Lys-36' of histone H3, thereby playing a central role in histone code. The protein is JmjC domain-containing histone demethylation protein 1 (JHD1) of Kluyveromyces lactis (strain ATCC 8585 / CBS 2359 / DSM 70799 / NBRC 1267 / NRRL Y-1140 / WM37) (Yeast).